A 151-amino-acid chain; its full sequence is Ribosome maturation factor RimP (151 aa).

It belongs to the RimP family.

The protein localises to the cytoplasm. In terms of biological role, required for maturation of 30S ribosomal subunits. The protein is Ribosome maturation factor RimP of Haemophilus influenzae (strain PittGG).